The sequence spans 389 residues: PqqA peptide cyclase (389 aa).

The Radical SAM core domain maps to 20–235; that stretch reads VGLPLWLLAE…TNEYRARLEA (216 aa). Positions 34, 38, and 41 each coordinate [4Fe-4S] cluster.

It belongs to the radical SAM superfamily. PqqE family. Interacts with PqqD. The interaction is necessary for activity of PqqE. It depends on [4Fe-4S] cluster as a cofactor.

It catalyses the reaction [PQQ precursor protein] + S-adenosyl-L-methionine = E-Y cross-linked-[PQQ precursor protein] + 5'-deoxyadenosine + L-methionine + H(+). It functions in the pathway cofactor biosynthesis; pyrroloquinoline quinone biosynthesis. Functionally, catalyzes the cross-linking of a glutamate residue and a tyrosine residue in the PqqA protein as part of the biosynthesis of pyrroloquinoline quinone (PQQ). In Pseudomonas fluorescens (strain ATCC BAA-477 / NRRL B-23932 / Pf-5), this protein is PqqA peptide cyclase.